We begin with the raw amino-acid sequence, 298 residues long: MATTSNQNVEFVRTGYGKNMVKVLHIRREGNHHHIIELIANVQLTLKTRKDYLTGDNSDIIPTDTVKNTVHALAKLKGIKSIESFALDICEHFLTAFNHVTRVKVNIDEVPWKRLEKNGVEHNHAFIHCPEALRFCEAEQYLSKTPVVHSGLKDMKVLKTTQTGFEGFLRDRFTTLTDAKDRFFCTSVYARWRYNTINVAFDAAWKAVKDTVIQKFAGPYDRGEYSPSVQKTLYDTQLLVLDRIPEVEEIEIIMPNQHYFVIDMTKIGLSNKDEVYLPLDNPSGNITGTVCRKPRARM.

Active-site charge relay system residues include Lys-18 and Thr-63. 7 residues coordinate urate: Thr-63, Asp-64, Phe-165, Arg-182, Val-229, Gln-230, and Asn-256. His-258 acts as the Charge relay system in catalysis. Residues 296 to 298 (ARM) carry the Microbody targeting signal motif.

It belongs to the uricase family. In terms of assembly, homotetramer; dimer of dimers.

It localises to the peroxisome. It carries out the reaction urate + O2 + H2O = 5-hydroxyisourate + H2O2. Its pathway is purine metabolism; urate degradation; (S)-allantoin from urate: step 1/3. Its activity is regulated as follows. Competitively inhibited by xanthine. Its function is as follows. Catalyzes the oxidation of uric acid to 5-hydroxyisourate, which is further processed to form (S)-allantoin. This chain is Uricase, found in Danio rerio (Zebrafish).